Reading from the N-terminus, the 1286-residue chain is DNA-directed RNA polymerase subunit beta' (1286 aa).

Zn(2+) is bound by residues cysteine 58, cysteine 60, cysteine 73, and cysteine 76. Positions 533, 535, and 537 each coordinate Mg(2+). Positions 867, 944, 951, and 954 each coordinate Zn(2+).

It belongs to the RNA polymerase beta' chain family. The RNAP catalytic core consists of 2 alpha, 1 beta, 1 beta' and 1 omega subunit. When a sigma factor is associated with the core the holoenzyme is formed, which can initiate transcription. The cofactor is Mg(2+). Zn(2+) is required as a cofactor.

The catalysed reaction is RNA(n) + a ribonucleoside 5'-triphosphate = RNA(n+1) + diphosphate. Its function is as follows. DNA-dependent RNA polymerase catalyzes the transcription of DNA into RNA using the four ribonucleoside triphosphates as substrates. This chain is DNA-directed RNA polymerase subunit beta', found in Tropheryma whipplei (strain TW08/27) (Whipple's bacillus).